The sequence spans 323 residues: tRNA U34 carboxymethyltransferase (323 aa).

Carboxy-S-adenosyl-L-methionine contacts are provided by residues K91, W105, K110, G130, 152–154 (DPT), 181–182 (IE), M196, Y200, and R315.

It belongs to the class I-like SAM-binding methyltransferase superfamily. CmoB family. As to quaternary structure, homotetramer.

The enzyme catalyses carboxy-S-adenosyl-L-methionine + 5-hydroxyuridine(34) in tRNA = 5-carboxymethoxyuridine(34) in tRNA + S-adenosyl-L-homocysteine + H(+). In terms of biological role, catalyzes carboxymethyl transfer from carboxy-S-adenosyl-L-methionine (Cx-SAM) to 5-hydroxyuridine (ho5U) to form 5-carboxymethoxyuridine (cmo5U) at position 34 in tRNAs. The sequence is that of tRNA U34 carboxymethyltransferase from Salmonella arizonae (strain ATCC BAA-731 / CDC346-86 / RSK2980).